The chain runs to 282 residues: Homeobox-leucine zipper protein HAT1 (282 aa).

Positions 71-134 (LEEETGVSSP…EEDYGGETCR (64 aa)) are disordered. Residues 76-89 (GVSSPNSTISSTVS) show a composition bias toward low complexity. The segment at residues 132-191 (TCRKKLRLSKDQSAVLEDTFKEHNTLNPKQKLALAKKLGLTARQVEVWFQNRRARTKLKQ) is a DNA-binding region (homeobox). Residues 199 to 220 (LKRCVEKLTEENRRLEKEAAEL) form a leucine-zipper region.

The protein belongs to the HD-ZIP homeobox family. Class II subfamily. As to quaternary structure, interacts with BZIP30.

It is found in the nucleus. Its function is as follows. Probable transcription factor. This chain is Homeobox-leucine zipper protein HAT1 (HAT1), found in Arabidopsis thaliana (Mouse-ear cress).